Consider the following 428-residue polypeptide: Putative zinc metalloprotease SAS1196 (428 aa).

H21 is a Zn(2+) binding site. E22 is an active-site residue. H25 contacts Zn(2+). A run of 4 helical transmembrane segments spans residues 172–194 (FLTL…IGLA), 309–331 (GSTL…GFSF), 352–374 (IISL…LIPI), and 401–420 (TTII…LVTW). The PDZ domain maps to 186–269 (ALVLFIGLAY…TKSVELTPKK (84 aa)).

This sequence belongs to the peptidase M50B family. Zn(2+) is required as a cofactor.

It localises to the cell membrane. The sequence is that of Putative zinc metalloprotease SAS1196 from Staphylococcus aureus (strain MSSA476).